An 87-amino-acid chain; its full sequence is U9-ctenitoxin-Pn1a (87 aa).

Residues 1–22 (MWLKTQLFVLAIAVIALLEVHA) form the signal peptide. Positions 23–37 (EPESNDNNELVVEEA) are excised as a propeptide. 4 disulfide bridges follow: cysteine 40–cysteine 54, cysteine 47–cysteine 64, cysteine 53–cysteine 73, and cysteine 66–cysteine 71. The propeptide occupies 75-87 (KSLREMAAAAFGR).

It belongs to the neurotoxin 02 (plectoxin) family. 01 (Tx3) subfamily. Expressed by the venom gland.

Its subcellular location is the secreted. Antagonist of L-type calcium channels (Cav1/CACNA1). This is U9-ctenitoxin-Pn1a from Phoneutria nigriventer (Brazilian armed spider).